The chain runs to 464 residues: Gasdermin-A3 (464 aa).

Residues 1-261 (MPVFEDVTRA…EEPEEEKLIG (261 aa)) form a triggers pyroptosis region. 9-13 (RALVR) contributes to the a cardiolipin binding site. A run of 4 beta stranded transmembrane segments spans residues 78 to 95 (NFSF…LVEV), 99 to 120 (VKVK…TLSV), 164 to 180 (VTVE…SLPS), and 184 to 198 (LGLQ…AVTI). Positions 255–327 (EEEKLIGEMH…DKGQKVTLEA (73 aa)) form a coiled coil.

The protein belongs to the gasdermin family. In terms of assembly, homooligomer; homooligomeric ring-shaped pore complex containing 18-36 subunits when inserted in the membrane. Cleavage relieves autoinhibition by releasing the N-terminal moiety (Gasdermin-A3, N-terminal) that initiates pyroptosis. In contrast to Gsdma, not cleaved by bacterial effector protein SpeB. Post-translationally, palmitoylated. As to expression, highest levels in skin with weak expression in placenta and testis. Not detected in the gastrointestinal tract. In skin, expressed in postnatal hair follicles and epidermis as well as sebaceous gland basal cells.

It localises to the cytoplasm. Its subcellular location is the cytosol. It is found in the cell membrane. The protein localises to the mitochondrion membrane. The full-length protein before cleavage is inactive: intramolecular interactions between N- and C-terminal domains mediate autoinhibition in the absence of activation signal. The intrinsic pyroptosis-inducing activity is carried by the released N-terminal moiety (Gasdermin-A3, N-terminal). Precursor of a pore-forming protein involved in the transition from catagen to telogen at the end of hair follicle morphogenesis. This form constitutes the precursor of the pore: upon cleavage, the released N-terminal moiety (Gasdermin-A3, N-terminal) binds to membranes and forms pores, triggering pyroptosis. This form acts as a sensor of infection: activation is triggered by cleavage by some bacterial effector protein, which releases the N-terminal moiety (Gasdermin-A3, N-terminal). Functionally, pore-forming protein that causes membrane permeabilization and pyroptosis. Released upon cleavage by some bacterial effector protein, and binds to membrane inner leaflet lipids. Homooligomerizes within the membrane and forms pores of 10-15 nanometers (nm) of inner diameter, allowing the release of mature interleukin-1 (IL1B and IL18) and triggering pyroptosis. Binds to membrane inner leaflet lipids, including bisphosphorylated phosphatidylinositols, such as phosphatidylinositol (4,5)-bisphosphate, as well as phosphatidylinositol (3,4,5)-bisphosphate, and more weakly to monophosphorylated phosphatidylinositols. Also binds to bacterial and mitochondrial lipids, including cardiolipin, and exhibits bactericidal activity. Plays a role in the transition from catagen to telogen at the end of hair follicle morphogenesis, possibly by regulating hair follicle stem cell niche maintenance. Also required for mammary gland development. In Mus musculus (Mouse), this protein is Gasdermin-A3.